The following is a 476-amino-acid chain: Ribulose bisphosphate carboxylase/oxygenase activase 1, chloroplastic (476 aa).

A chloroplast-targeting transit peptide spans 1–56 (MAAAYSTVGAVNRAPLSLNGSGARASLVPSTAFFGSSLKKSAAKFPKASSGNFKIV). 165–172 (GGKGQGKS) contributes to the ATP binding site.

Belongs to the RuBisCO activase family.

It localises to the plastid. The protein resides in the chloroplast stroma. Its function is as follows. Activation of RuBisCO (ribulose-1,5-bisphosphate carboxylase/oxygenase; EC 4.1.1.39) involves the ATP-dependent carboxylation of the epsilon-amino group of lysine leading to a carbamate structure. This Larrea tridentata (Creosote bush) protein is Ribulose bisphosphate carboxylase/oxygenase activase 1, chloroplastic (RCA1).